Reading from the N-terminus, the 886-residue chain is UPF0592 membrane protein C7D4.03c (886 aa).

Positions 87–112 are disordered; the sequence is ILNEPYNESPSSSSSDSSSRSTSPFS. The span at 95-112 shows a compositional bias: low complexity; it reads SPSSSSSDSSSRSTSPFS. 3 consecutive transmembrane segments (helical) span residues 277-297, 374-394, and 400-420; these read FCAS…DHFL, GGFF…QFSF, and VIYF…LTIS.

This sequence belongs to the UPF0592 family.

Its subcellular location is the membrane. The protein is UPF0592 membrane protein C7D4.03c of Schizosaccharomyces pombe (strain 972 / ATCC 24843) (Fission yeast).